A 347-amino-acid polypeptide reads, in one-letter code: Iron-sulfur cluster assembly protein SufC (347 aa).

An ABC transporter domain is found at 100 to 346 (LEIKDLHAIE…ENKGYSQFLK (247 aa)). An ATP-binding site is contributed by 134 to 141 (GRNGSGKS).

Belongs to the ABC transporter superfamily. Ycf16 family. As to quaternary structure, component of a complex composed of SufB, SufC and SufD in a stoichiometric ratio of 1:2:1. Interacts with SufB. Interacts with SufD; the interaction enhances the ATPase activity of SufC. Post-translationally, proteolytically cleaved.

It localises to the plastid. It is found in the apicoplast. It catalyses the reaction ATP + H2O = ADP + phosphate + H(+). Its pathway is cofactor biosynthesis; iron-sulfur cluster biosynthesis. Its function is as follows. Participates in the sulfur mobilization (SUF) pathway for iron-sulfur (Fe-S) cluster biogenesis. As part of a complex consisting of SufB-SufC(2)-SufD, involved in assembly of [4Fe-4S] clusters. Exhibits ATPase activity. The polypeptide is Iron-sulfur cluster assembly protein SufC (Plasmodium falciparum (isolate 3D7)).